The chain runs to 1522 residues: Lysophospholipase NTE1 (1522 aa).

The Lumenal segment spans residues 1–73; it reads MVDGTYVNSS…SLLVYLINGT (73 aa). Residues 74-94 traverse the membrane as a helical segment; it reads VPFYLVVLGSVFTPIIVYLIL. At 95-1522 the chain is on the cytoplasmic side; that stretch reads RSRVLSAYSR…IHLLHRRNSI (1428 aa). 3 disordered regions span residues 443-468, 485-523, and 535-556; these read SVQE…TPNK, DLLS…ASSP, and SQNF…PSVV. Low complexity-rich tracts occupy residues 498–511 and 540–555; these read KTAS…PRIS and PLSS…KPSV. Residues 661-782 and 778-918 contribute to the a nucleoside 3',5'-cyclic phosphate site; these read PINV…LTKL and TLTK…VAHK. Disordered regions lie at residues 828–852 and 1125–1145; these read QKSK…DNQP and SSQN…GAPP. The region spanning 1219-1383 is the PNPLA domain; it reads LVLGGGGARG…LDNLPVLEMK (165 aa). The GXGXXG signature appears at 1223–1228; the sequence is GGGARG. Positions 1250–1254 match the GXSXG motif; that stretch reads GTSIG. Ser-1252 serves as the catalytic Nucleophile. The active-site Proton acceptor is Asp-1370. The DGA/G signature appears at 1370–1372; that stretch reads DGG.

Belongs to the NTE family.

Its subcellular location is the endoplasmic reticulum membrane. The catalysed reaction is a 1-acyl-sn-glycero-3-phosphocholine + H2O = sn-glycerol 3-phosphocholine + a fatty acid + H(+). Its activity is regulated as follows. Inhibited by organophosphorus esters. Functionally, intracellular phospholipase B that catalyzes the double deacylation of phosphatidylcholine (PC) to glycerophosphocholine (GroPCho). Plays an important role in membrane lipid homeostasis. Responsible for the rapid PC turnover in response to inositol, elevated temperatures, or when choline is present in the growth medium. This chain is Lysophospholipase NTE1 (NTE1), found in Eremothecium gossypii (strain ATCC 10895 / CBS 109.51 / FGSC 9923 / NRRL Y-1056) (Yeast).